Consider the following 611-residue polypeptide: Translation initiation factor RLI1 (611 aa).

4Fe-4S ferredoxin-type domains are found at residues 7–31 and 46–75; these read RVAI…SCPV and RIAF…IINL. ABC transporter domains lie at 77 to 318 and 345 to 565; these read TNLE…FLDG and AEKS…LKNL. ATP-binding positions include 110–117 and 382–389; these read GTNGIGKS and GENGTGKT.

Belongs to the ABC transporter superfamily. ABCE family. In terms of assembly, component of the multifactor complex (MFC). The complex associates with pre-initiation complexes.

Its subcellular location is the cytoplasm. The protein resides in the nucleus. Functionally, component of the multifactor complex (MFC) involved in translation initiation. Required for the binding of MFC to the 40S ribosome. Required for the processing and nuclear export of the 60S and 40S ribosomal subunits. This is Translation initiation factor RLI1 (RLI1) from Chaetomium thermophilum (strain DSM 1495 / CBS 144.50 / IMI 039719) (Thermochaetoides thermophila).